Here is a 208-residue protein sequence, read N- to C-terminus: Ribosomal RNA small subunit methyltransferase G (208 aa).

Residues G75, L80, 126-127, and R141 contribute to the S-adenosyl-L-methionine site; that span reads VE.

The protein belongs to the methyltransferase superfamily. RNA methyltransferase RsmG family.

The protein localises to the cytoplasm. The enzyme catalyses guanosine(527) in 16S rRNA + S-adenosyl-L-methionine = N(7)-methylguanosine(527) in 16S rRNA + S-adenosyl-L-homocysteine. Its function is as follows. Specifically methylates the N7 position of guanine in position 527 of 16S rRNA. The chain is Ribosomal RNA small subunit methyltransferase G from Marinomonas sp. (strain MWYL1).